The following is a 1095-amino-acid chain: DNA-directed RNA polymerase subunit beta'' (1095 aa).

Residues C220, C293, C300, and C303 each contribute to the Zn(2+) site.

This sequence belongs to the RNA polymerase beta' chain family. RpoC2 subfamily. As to quaternary structure, in plastids the minimal PEP RNA polymerase catalytic core is composed of four subunits: alpha, beta, beta', and beta''. When a (nuclear-encoded) sigma factor is associated with the core the holoenzyme is formed, which can initiate transcription. It depends on Zn(2+) as a cofactor.

It is found in the plastid. It localises to the chloroplast. It carries out the reaction RNA(n) + a ribonucleoside 5'-triphosphate = RNA(n+1) + diphosphate. DNA-dependent RNA polymerase catalyzes the transcription of DNA into RNA using the four ribonucleoside triphosphates as substrates. The chain is DNA-directed RNA polymerase subunit beta'' from Zygnema circumcarinatum (Green alga).